Here is a 454-residue protein sequence, read N- to C-terminus: Pyrimidine/purine nucleotide 5'-monophosphate nucleosidase (454 aa).

This sequence belongs to the LOG family.

The catalysed reaction is a pyrimidine ribonucleoside 5'-phosphate + H2O = a pyrimidine nucleobase + D-ribose 5-phosphate. The enzyme catalyses AMP + H2O = adenine + D-ribose 5-phosphate. It carries out the reaction GMP + H2O = guanine + D-ribose 5-phosphate. It catalyses the reaction CMP + H2O = cytosine + D-ribose 5-phosphate. The catalysed reaction is IMP + H2O = hypoxanthine + D-ribose 5-phosphate. The enzyme catalyses UMP + H2O = D-ribose 5-phosphate + uracil. It carries out the reaction dTMP + H2O = 2-deoxy-D-ribose 5-phosphate + thymine. Catalyzes the hydrolysis of the N-glycosidic bond of diverse pyrimidine and purine nucleotide 5'-monophosphates, to form ribose 5-phosphate and the corresponding free base. Can use AMP, GMP, IMP, CMP, dTMP and UMP as substrates. Cannot catalyze the reverse reactions. May contribute to nucleoside pool homeostasis by degrading excess nucleotides and feeding back the ribose moiety to catabolism. In Escherichia coli O157:H7, this protein is Pyrimidine/purine nucleotide 5'-monophosphate nucleosidase.